The primary structure comprises 207 residues: Octanoyltransferase (207 aa).

Residues 27–203 (ADTEDELWVV…HLETQFTPKA (177 aa)) enclose the BPL/LPL catalytic domain. Substrate is bound by residues 66 to 73 (RGGQITYH), 133 to 135 (SLG), and 146 to 148 (GLA). Residue cysteine 164 is the Acyl-thioester intermediate of the active site.

Belongs to the LipB family.

Its subcellular location is the cytoplasm. The enzyme catalyses octanoyl-[ACP] + L-lysyl-[protein] = N(6)-octanoyl-L-lysyl-[protein] + holo-[ACP] + H(+). It functions in the pathway protein modification; protein lipoylation via endogenous pathway; protein N(6)-(lipoyl)lysine from octanoyl-[acyl-carrier-protein]: step 1/2. Its function is as follows. Catalyzes the transfer of endogenously produced octanoic acid from octanoyl-acyl-carrier-protein onto the lipoyl domains of lipoate-dependent enzymes. Lipoyl-ACP can also act as a substrate although octanoyl-ACP is likely to be the physiological substrate. The sequence is that of Octanoyltransferase from Neisseria meningitidis serogroup B (strain ATCC BAA-335 / MC58).